A 1093-amino-acid chain; its full sequence is GPI ethanolamine phosphate transferase 3, catalytic subunit (1093 aa).

Residues 4–24 (VSVLLFLAWVCFLFYAGIALF) traverse the membrane as a helical segment. An N-linked (GlcNAc...) asparagine glycan is attached at N268. 9 consecutive transmembrane segments (helical) span residues 460–480 (AAAC…GFLF), 483–503 (LLLI…GVSV), 512–532 (VVLG…KAWV), 669–689 (LWYG…RLWL), 702–722 (VLFV…YWAL), 748–768 (VMGL…TVLV), 831–851 (SVYS…LMLL), 856–876 (VSLV…LLAA), and 945–965 (FASH…PFLC). A disordered region spans residues 971 to 991 (KRRQPLPGSESEARVRPEEEE). Helical transmembrane passes span 1018-1038 (LKYL…ASIL) and 1052-1072 (FIFE…GIAL).

It belongs to the PIGG/PIGN/PIGO family. PIGO subfamily. In terms of assembly, forms the ethanolamine phosphate transferase 3 complex composed by PIGO and PIGF. PIGF is required to stabilize PIGO.

It is found in the endoplasmic reticulum membrane. Its pathway is glycolipid biosynthesis; glycosylphosphatidylinositol-anchor biosynthesis. Functionally, catalytic subunit of the ethanolamine phosphate transferase 3 complex that transfers an ethanolamine phosphate (EtNP) from a phosphatidylethanolamine (PE) to the 6-OH position of the third alpha-1,2-linked mannose of the an alpha-D-Man-(1-&gt;2)-alpha-D-Man-(1-&gt;6)-2-PEtn-alpha-D-Man-(1-&gt;4)-alpha-D-GlcN-(1-&gt;6)-(1-radyl,2-acyl-sn-glycero-3-phospho)-2-acyl-inositol (also termed H6) intermediate to generate a 6-PEtn-alpha-D-Man-(1-&gt;2)-alpha-D-Man-(1-&gt;6)-2-PEtn-alpha-D-Man-(1-&gt;4)-alpha-D-GlcN-(1-&gt;6)-(1-radyl,2-acyl-sn-glycero-3-phospho)-2-acyl-inositol (also termed H7) and participates in the tenth step of the glycosylphosphatidylinositol-anchor biosynthesis. The chain is GPI ethanolamine phosphate transferase 3, catalytic subunit from Mus musculus (Mouse).